The sequence spans 71 residues: Vitellogenin-B2 (71 aa).

An N-terminal signal peptide occupies residues 1–15 (MRGIILALLLALAGC). One can recognise a Vitellogenin domain in the interval 24–71 (FSESKTYVYNYEGIILNGIPENGLARSGIKLNCKVELSGYAQRSYMLK).

In terms of tissue distribution, produced by the liver, secreted into the blood and then sequestered by receptor mediated endocytosis into growing oocytes, where it is generally cleaved, giving rise to the respective yolk components.

In terms of biological role, precursor of the major egg-yolk proteins that are sources of nutrients during early development of oviparous organisms. The chain is Vitellogenin-B2 from Xenopus laevis (African clawed frog).